Here is a 249-residue protein sequence, read N- to C-terminus: Derlin-2.1 (249 aa).

At 1 to 21 the chain is on the cytoplasmic side; that stretch reads MAQAVEEWYRQMPIITRSYLT. The helical transmembrane segment at 22–42 threads the bilayer; that stretch reads AAVVTTVGCTLEIISPYHLYL. The Lumenal portion of the chain corresponds to 43–96; the sequence is NPKLVVQHYEIWRLVTNFLYFRKMDLDFLFHMFFLARYCKLLEENSFRGRTADF. The helical transmembrane segment at 97-117 threads the bilayer; the sequence is FYMLLFGATVLTSIVLIGGMI. The Cytoplasmic segment spans residues 118 to 122; it reads PYISE. The chain crosses the membrane as a helical span at residues 123 to 143; that stretch reads TFARILFLSNSLTFMMVYVWS. Residues 144-152 are Lumenal-facing; the sequence is KHNPFIHMS. A helical transmembrane segment spans residues 153–173; sequence FLGLFTFTAAYLPWVLLGFSI. The Cytoplasmic portion of the chain corresponds to 174–249; that stretch reads LVGSSTWVDL…GAMGLDPQAQ (76 aa).

This sequence belongs to the derlin family. As to expression, expressed in roots, stalks, leaves, embryo and endosperm.

It localises to the endoplasmic reticulum membrane. Functionally, may be involved in the degradation process of specific misfolded endoplasmic reticulum (ER) luminal proteins. In Zea mays (Maize), this protein is Derlin-2.1 (DER2.1).